The primary structure comprises 1811 residues: ADP-ribosylation factor guanine nucleotide-exchange factor sec71 (1811 aa).

Disordered regions lie at residues 1 to 108 (MTDL…TSEA) and 316 to 336 (INMN…PIPS). 3 stretches are compositionally biased toward basic and acidic residues: residues 33–49 (STIK…HDSI), 57–73 (KSIE…KDIE), and 80–91 (PPEDDLDSRSIE). A Phosphoserine modification is found at Ser40. Composition is skewed to polar residues over residues 92 to 108 (SEQT…TSEA) and 316 to 326 (INMNKSSSNGT). The residue at position 326 (Thr326) is a Phosphothreonine. Residues Ser332 and Ser353 each carry the phosphoserine modification. An HUS box motif is present at residues 533–537 (NYDCI). Positions 643-663 (TAKDDETESTSKGEEPQKSKS) are enriched in basic and acidic residues. The tract at residues 643–688 (TAKDDETESTSKGEEPQKSKSEPPSAGINSTSMDNLESSGQALATD) is disordered. Positions 669-688 (GINSTSMDNLESSGQALATD) are enriched in polar residues. Residues 692–880 (QFENLKHRKK…TEVYEEIQKN (189 aa)) enclose the SEC7 domain. Ser741 bears the Phosphoserine mark. Thr742 carries the phosphothreonine modification. Asp812 is a Mg(2+) binding site. Residues 889–1103 (DPTSNFPEIP…TTKPLRKSLD (215 aa)) are HDS1 domain.

The protein resides in the cytoplasm. The protein localises to the golgi apparatus. It is found in the trans-Golgi network. It localises to the cytoplasmic vesicle. Its subcellular location is the COPI-coated vesicle membrane. The protein resides in the COPII-coated vesicle membrane. In terms of biological role, guanine exchange factor that acts as an activator of arf1 at the trans-Golgi net-work and is thus involved in vesicular budding and traffic between compartments of the Golgi apparatus. Activation of Arf (ADP-ribosylation factor) GTPases is essential for vesicle formation via recruitment of cargo adapters and coat proteins necessary for Golgi trafficking. Involved in tunicamycin-induced ER stress response and subsequent apoptosis. The polypeptide is ADP-ribosylation factor guanine nucleotide-exchange factor sec71 (Schizosaccharomyces pombe (strain 972 / ATCC 24843) (Fission yeast)).